The primary structure comprises 273 residues: HLA class II histocompatibility antigen, DO beta chain (273 aa).

Positions 1–26 (MGSGWVPWVVALLVNLTRLDSSMTQG) are cleaved as a signal peptide. The segment at 27–120 (TDSPEDFVIQ…LGAPFTVGRK (94 aa)) is beta-1. The Extracellular segment spans residues 27–224 (TDSPEDFVIQ…RAQSEYSWRK (198 aa)). 2 cysteine pairs are disulfide-bonded: cysteine 41-cysteine 105 and cysteine 143-cysteine 199. A glycan (N-linked (GlcNAc...) asparagine) is linked at asparagine 45. The tract at residues 121 to 214 (VQPEVTVYPE…SLLSPVSVEW (94 aa)) is beta-2. Positions 123 to 213 (PEVTVYPERT…SSLLSPVSVE (91 aa)) constitute an Ig-like C1-type domain. The connecting peptide stretch occupies residues 215 to 224 (RAQSEYSWRK). The chain crosses the membrane as a helical span at residues 225–245 (MLSGIAAFLLGLIFLLVGIVI). The Cytoplasmic segment spans residues 246–273 (QLRAQKGYVRTQMSGNEVSRAVLLPQSC).

It belongs to the MHC class II family. In terms of assembly, heterodimer of an alpha chain (DOA) and a beta chain (DOB). Forms a heterotetrameric complex with an HLA-DM molecule during intracellular transport in endosomal/lysosomal compartments in B-cells.

The protein localises to the endosome membrane. It localises to the lysosome membrane. In terms of biological role, important modulator in the HLA class II restricted antigen presentation pathway by interaction with the HLA-DM molecule in B-cells. Modifies peptide exchange activity of HLA-DM. In Homo sapiens (Human), this protein is HLA class II histocompatibility antigen, DO beta chain (HLA-DOB).